The sequence spans 259 residues: GTP cyclohydrolase FolE2 (259 aa).

It belongs to the GTP cyclohydrolase IV family.

The enzyme catalyses GTP + H2O = 7,8-dihydroneopterin 3'-triphosphate + formate + H(+). The protein operates within cofactor biosynthesis; 7,8-dihydroneopterin triphosphate biosynthesis; 7,8-dihydroneopterin triphosphate from GTP: step 1/1. Functionally, converts GTP to 7,8-dihydroneopterin triphosphate. The protein is GTP cyclohydrolase FolE2 of Nitratidesulfovibrio vulgaris (strain DSM 19637 / Miyazaki F) (Desulfovibrio vulgaris).